The sequence spans 109 residues: Nucleoid-associated protein MS1507 (109 aa).

The interval 1–21 (MFGKGGLGNLMKQAQQMQERM) is disordered.

Belongs to the YbaB/EbfC family. Homodimer.

The protein localises to the cytoplasm. The protein resides in the nucleoid. Its function is as follows. Binds to DNA and alters its conformation. May be involved in regulation of gene expression, nucleoid organization and DNA protection. The chain is Nucleoid-associated protein MS1507 from Mannheimia succiniciproducens (strain KCTC 0769BP / MBEL55E).